The primary structure comprises 850 residues: Mitogen-activated protein kinase kinase kinase 11 (850 aa).

A Phosphoserine modification is found at Ser11. Residues 16-35 are disordered; that stretch reads WNGSGSGGGGGTGGVRPEGS. Gly residues predominate over residues 17-31; sequence NGSGSGGGGGTGGVR. Position 35 is a phosphoserine (Ser35). The SH3 domain maps to 42–106; the sequence is YANPVWTALF…PSNYVSRGGG (65 aa). A Protein kinase domain is found at 118–380; sequence LRLEEVIGIG…ASILQQLEAL (263 aa). Residues 124–132 and Lys145 each bind ATP; that span reads IGIGGFGKV. Asp242 serves as the catalytic Proton acceptor. Thr278 carries the phosphothreonine; by autocatalysis modification. A Phosphoserine; by autocatalysis and MAP4K1 modification is found at Ser282. Ser395 is modified (phosphoserine). 2 leucine-zipper regions span residues 404-425 and 439-460; these read IQGL…EEEL and LRRR…ELTL. Phosphoserine is present on residues Ser508 and Ser525. The disordered stretch occupies residues 535–644; that stretch reads QLEPTESGQT…SSGTPKLIQR (110 aa). Residues 538 to 547 show a composition bias toward polar residues; that stretch reads PTESGQTWGR. Phosphoserine is present on residues Ser549, Ser556, and Ser557. A compositionally biased stretch (basic and acidic residues) spans 551–563; the sequence is RRLEDSSNGERRA. A compositionally biased stretch (low complexity) spans 598-610; it reads SSPLGSPSTPPAL. Ser655 is modified (phosphoserine). The interval 657-850 is disordered; the sequence is GLGRDLQPPG…QAPWAPEAGP (194 aa). The span at 677 to 693 shows a compositional bias: pro residues; that stretch reads TAPPPAQMPSPCPPELP. Positions 700 to 711 are enriched in polar residues; sequence LSQTTPDAHSSP. Position 709 is a phosphoserine (Ser709). At Thr712 the chain carries Phosphothreonine. 9 positions are modified to phosphoserine: Ser728, Ser731, Ser743, Ser751, Ser761, Ser773, Ser792, Ser796, and Ser818. Over residues 763–776 the composition is skewed to low complexity; the sequence is PLGLISRPRPSPLR. Positions 790-802 are enriched in pro residues; that stretch reads RPSPLPSPQPAPR. Residues 803–819 are compositionally biased toward low complexity; that stretch reads RAPWTLFPDSDPFWDSP.

This sequence belongs to the protein kinase superfamily. STE Ser/Thr protein kinase family. MAP kinase kinase kinase subfamily. In terms of assembly, homodimer; undergoes dimerization during activation. Interacts with MAP2K4/MKK4 and MAP2K7/MKK7. Found in a complex with SH3RF1, RAC1, MAP2K7/MKK7, MAPK8IP1/JIP1 and MAPK8/JNK1. Mg(2+) serves as cofactor. In terms of processing, autophosphorylation on serine and threonine residues within the activation loop plays a role in enzyme activation. Thr-278 is likely to be the main autophosphorylation site. Phosphorylation of Ser-556 and Ser-557 is induced by CDC42.

Its subcellular location is the cytoplasm. It localises to the cytoskeleton. It is found in the microtubule organizing center. The protein resides in the centrosome. It carries out the reaction L-seryl-[protein] + ATP = O-phospho-L-seryl-[protein] + ADP + H(+). The catalysed reaction is L-threonyl-[protein] + ATP = O-phospho-L-threonyl-[protein] + ADP + H(+). Its activity is regulated as follows. Homodimerization via the leucine zipper domains is required for autophosphorylation and subsequent activation. In terms of biological role, activates the JUN N-terminal pathway. Required for serum-stimulated cell proliferation and for mitogen and cytokine activation of MAPK14 (p38), MAPK3 (ERK) and MAPK8 (JNK1) through phosphorylation and activation of MAP2K4/MKK4 and MAP2K7/MKK7. Plays a role in mitogen-stimulated phosphorylation and activation of BRAF, but does not phosphorylate BRAF directly. Influences microtubule organization during the cell cycle. In Mus musculus (Mouse), this protein is Mitogen-activated protein kinase kinase kinase 11 (Map3k11).